We begin with the raw amino-acid sequence, 150 residues long: Protein Smg homolog (150 aa).

This sequence belongs to the Smg family.

The protein is Protein Smg homolog of Leptothrix cholodnii (strain ATCC 51168 / LMG 8142 / SP-6) (Leptothrix discophora (strain SP-6)).